The primary structure comprises 683 residues: Elongation factor G 1 (683 aa).

One can recognise a tr-type G domain in the interval 3–278; the sequence is DKMRNIGIMA…AVVDFLPAPN (276 aa). GTP is bound by residues 12–19, 76–80, and 130–133; these read AHIDAGKT, DTPGH, and NKMD.

It belongs to the TRAFAC class translation factor GTPase superfamily. Classic translation factor GTPase family. EF-G/EF-2 subfamily.

It is found in the cytoplasm. Catalyzes the GTP-dependent ribosomal translocation step during translation elongation. During this step, the ribosome changes from the pre-translocational (PRE) to the post-translocational (POST) state as the newly formed A-site-bound peptidyl-tRNA and P-site-bound deacylated tRNA move to the P and E sites, respectively. Catalyzes the coordinated movement of the two tRNA molecules, the mRNA and conformational changes in the ribosome. The sequence is that of Elongation factor G 1 from Treponema denticola (strain ATCC 35405 / DSM 14222 / CIP 103919 / JCM 8153 / KCTC 15104).